The following is a 402-amino-acid chain: F-box protein At4g22390 (402 aa).

One can recognise an F-box domain in the interval 1–49 (MAECPTDLINEMFLRLRATTLVKCRVLSKPCFSLIDSPEFVSSHLRRRL).

The protein is F-box protein At4g22390 of Arabidopsis thaliana (Mouse-ear cress).